The primary structure comprises 202 residues: MIGRLRGSLAEKQPPHLVLDVNGVGYEVEVPMTTLYRLPHVGETVTLHTHLVVREDAHLLYGFYEKRERELFRELIRLNGVGPKLALALMSGLEVDELVRCVQAQDTSALTRIPGVGKKTAERLLVELKDRFKAWEALPGTFTLVSNGPNQAEPVASAESDAVSALISLGYKPQEASKAVSAIKEKDLSSADLIRRALKGMG.

The domain I stretch occupies residues 1–64 (MIGRLRGSLA…EDAHLLYGFY (64 aa)). The interval 65-143 (EKRERELFRE…AWEALPGTFT (79 aa)) is domain II. Positions 144–153 (LVSNGPNQAE) are flexible linker. Residues 154 to 202 (PVASAESDAVSALISLGYKPQEASKAVSAIKEKDLSSADLIRRALKGMG) form a domain III region.

Belongs to the RuvA family. As to quaternary structure, homotetramer. Forms an RuvA(8)-RuvB(12)-Holliday junction (HJ) complex. HJ DNA is sandwiched between 2 RuvA tetramers; dsDNA enters through RuvA and exits via RuvB. An RuvB hexamer assembles on each DNA strand where it exits the tetramer. Each RuvB hexamer is contacted by two RuvA subunits (via domain III) on 2 adjacent RuvB subunits; this complex drives branch migration. In the full resolvosome a probable DNA-RuvA(4)-RuvB(12)-RuvC(2) complex forms which resolves the HJ.

The protein localises to the cytoplasm. Its function is as follows. The RuvA-RuvB-RuvC complex processes Holliday junction (HJ) DNA during genetic recombination and DNA repair, while the RuvA-RuvB complex plays an important role in the rescue of blocked DNA replication forks via replication fork reversal (RFR). RuvA specifically binds to HJ cruciform DNA, conferring on it an open structure. The RuvB hexamer acts as an ATP-dependent pump, pulling dsDNA into and through the RuvAB complex. HJ branch migration allows RuvC to scan DNA until it finds its consensus sequence, where it cleaves and resolves the cruciform DNA. In Pseudomonas syringae pv. syringae (strain B728a), this protein is Holliday junction branch migration complex subunit RuvA.